The sequence spans 74 residues: Guanine nucleotide-binding protein G(T) subunit gamma-T1 (74 aa).

The residue at position 71 (cysteine 71) is a Cysteine methyl ester. Cysteine 71 is lipidated: S-farnesyl cysteine. A propeptide spans 72–74 (removed in mature form); the sequence is VIS.

The protein belongs to the G protein gamma family. As to quaternary structure, g proteins are composed of 3 units, alpha, beta and gamma. In terms of tissue distribution, retinal rod outer segment.

It is found in the cell membrane. In terms of biological role, guanine nucleotide-binding proteins (G proteins) are involved as a modulator or transducer in various transmembrane signaling systems. The beta and gamma chains are required for the GTPase activity, for replacement of GDP by GTP, and for G protein-effector interaction. This is Guanine nucleotide-binding protein G(T) subunit gamma-T1 (GNGT1) from Canis lupus familiaris (Dog).